Reading from the N-terminus, the 283-residue chain is Pantothenate synthetase (283 aa).

An ATP-binding site is contributed by 30–37; it reads MGYLHEGH. Residue H37 is the Proton donor of the active site. Q61 lines the (R)-pantoate pocket. Q61 contacts beta-alanine. 147-150 is a binding site for ATP; sequence GQKD. A (R)-pantoate-binding site is contributed by Q153. Residues V176 and 184–187 each bind ATP; that span reads LSSR.

Belongs to the pantothenate synthetase family. In terms of assembly, homodimer.

The protein localises to the cytoplasm. It carries out the reaction (R)-pantoate + beta-alanine + ATP = (R)-pantothenate + AMP + diphosphate + H(+). The protein operates within cofactor biosynthesis; (R)-pantothenate biosynthesis; (R)-pantothenate from (R)-pantoate and beta-alanine: step 1/1. In terms of biological role, catalyzes the condensation of pantoate with beta-alanine in an ATP-dependent reaction via a pantoyl-adenylate intermediate. The protein is Pantothenate synthetase of Moorella thermoacetica (strain ATCC 39073 / JCM 9320).